The chain runs to 1203 residues: Partitioning defective 3 homolog B (1203 aa).

Disordered regions lie at residues 79-104 (FDEQ…PDAF) and 138-162 (RRSS…SGQS). Ser100 bears the Phosphoserine mark. Positions 152–162 (QPSTASLSGQS) are enriched in polar residues. In terms of domain architecture, PDZ 1 spans 201–289 (TRAVEISGEG…SPSVILHVLL (89 aa)). Residues 334–374 (TRASSPEGEEPASPQQSKSPRVPRLGRKPSSPSLSPLMGFG) form a disordered region. Phosphoserine occurs at positions 346, 352, and 368. 2 consecutive PDZ domains span residues 383 to 468 (KIDL…VIAR) and 496 to 585 (TLEI…GMIQ). Residues Ser635, Ser710, Ser728, Ser730, Ser746, Ser749, and Ser801 each carry the phosphoserine modification. The segment covering 718–732 (GKVQSLADRRSDSPG) has biased composition (basic and acidic residues). The segment at 718 to 743 (GKVQSLADRRSDSPGKDFGPTLGLKK) is disordered. Disordered stretches follow at residues 787–927 (KSYD…EKQA), 968–994 (VFRS…PDHL), and 1050–1203 (RPSD…TAAV). A Phosphothreonine modification is found at Thr810. A compositionally biased stretch (basic and acidic residues) spans 827-842 (VENKAKNIKKTKEKEK). Over residues 843 to 854 (KKGKGKLKVKEK) the composition is skewed to basic residues. Basic and acidic residues-rich tracts occupy residues 855 to 865 (KLKEEHEDAER), 881 to 893 (KKDD…EQKG), 906 to 927 (ERMK…EKQA), and 984 to 994 (RDGRPLSPDHL). A phosphoserine mark is found at Ser1088 and Ser1182.

This sequence belongs to the PAR3 family. Interacts with PARD6B. Interacts with INSC/inscuteable.

Its subcellular location is the endomembrane system. The protein resides in the cell junction. It is found in the tight junction. Its function is as follows. Putative adapter protein involved in asymmetrical cell division and cell polarization processes. May play a role in the formation of epithelial tight junctions. This chain is Partitioning defective 3 homolog B (Pard3b), found in Mus musculus (Mouse).